The primary structure comprises 317 residues: Ornithine carbamoyltransferase (317 aa).

Residues 57–60 (STRT), glutamine 84, arginine 108, and 135–138 (HPCQ) contribute to the carbamoyl phosphate site. L-ornithine is bound by residues asparagine 166, aspartate 230, and 234-235 (SM). Carbamoyl phosphate-binding positions include 270–271 (CL) and arginine 298.

It belongs to the aspartate/ornithine carbamoyltransferase superfamily. OTCase family. As to quaternary structure, homododecamer.

Its subcellular location is the cytoplasm. It catalyses the reaction carbamoyl phosphate + L-ornithine = L-citrulline + phosphate + H(+). Its pathway is amino-acid biosynthesis; L-arginine biosynthesis; L-arginine from L-ornithine and carbamoyl phosphate: step 1/3. Its function is as follows. Reversibly catalyzes the transfer of the carbamoyl group from carbamoyl phosphate (CP) to the N(epsilon) atom of ornithine (ORN) to produce L-citrulline. The polypeptide is Ornithine carbamoyltransferase (Pyrococcus horikoshii (strain ATCC 700860 / DSM 12428 / JCM 9974 / NBRC 100139 / OT-3)).